Here is a 213-residue protein sequence, read N- to C-terminus: MDTLWDISPPVSPATPVWPGDTPVAVERVWRMEAGSPVNVARLTLSPHTGAHCDAPLHYDADGAPIGAVPLDTYLGPCRVIHCIGASPVVRPADVEAALDGVPPRVLLRTYARAAVEQWDSNFCAVAPDTVDLLAAHGVKLIGIDTPSLDPQESKTMDAHHRVRAHRMAILEGIVLDDVPPGDYELIALPLKFATLDASPVRAVLRALPAHAS.

Trp-18 serves as a coordination point for substrate. His-48, His-52, and Asp-54 together coordinate Zn(2+). Catalysis depends on His-58, which acts as the Proton donor/acceptor. Zn(2+) contacts are provided by His-160 and Glu-172.

The protein belongs to the Cyclase 1 superfamily. KynB family. Homodimer. Requires Zn(2+) as cofactor.

It catalyses the reaction N-formyl-L-kynurenine + H2O = L-kynurenine + formate + H(+). It functions in the pathway amino-acid degradation; L-tryptophan degradation via kynurenine pathway; L-kynurenine from L-tryptophan: step 2/2. Its function is as follows. Catalyzes the hydrolysis of N-formyl-L-kynurenine to L-kynurenine, the second step in the kynurenine pathway of tryptophan degradation. The polypeptide is Kynurenine formamidase (Burkholderia cenocepacia (strain HI2424)).